The chain runs to 358 residues: Psilocybin cluster transcription regulator (358 aa).

2 disordered regions span residues 1–40 and 62–212; these read MAPA…IAGM and SGGK…RRRR. Pro residues predominate over residues 18–29; the sequence is PPAPGAPAPANA. Polar residues predominate over residues 79–91; the sequence is QTLSNLAQAQPYG. The span at 179 to 190 shows a compositional bias: low complexity; the sequence is PTTGRRGGRSAT. Residues 195–209 show a composition bias toward basic and acidic residues; sequence EWSRQRKDNHKEVER. The basic motif stretch occupies residues 199-212; sequence QRKDNHKEVERRRR. A bHLH domain is found at 199 to 249; the sequence is QRKDNHKEVERRRRGNINEGINELGRIVPSGSGEKAKGAILSRAVQYIHHL. Positions 213–249 are helix-loop-helix motif; sequence GNINEGINELGRIVPSGSGEKAKGAILSRAVQYIHHL. A coiled-coil region spans residues 264 to 306; the sequence is KLLMDQAMGDLQAQLEEVKRLWEEERMARTRLEAELEVLRNMN. The segment at 308 to 358 is disordered; it reads VNAGSAPASKDESAAGTKRRSTDGAEAATAATESSTANAEGERDGKRQRTE. Residues 331-346 show a composition bias toward low complexity; sequence GAEAATAATESSTANA. Basic and acidic residues predominate over residues 347–358; the sequence is EGERDGKRQRTE.

The protein localises to the nucleus. In terms of biological role, transcription factor that may regulate the expression of the gene cluster that mediates the biosynthesis of psilocybin, a psychotropic tryptamine-derived natural product. This is Psilocybin cluster transcription regulator from Psilocybe cubensis (Psychedelic mushroom).